Here is a 193-residue protein sequence, read N- to C-terminus: Large ribosomal subunit protein eL18 (193 aa).

The tract at residues 158–193 (HFGAAGVPGSHAKPHVSSRGKERQRSSKRRHAFRHK) is disordered. The segment covering 183 to 193 (SSKRRHAFRHK) has biased composition (basic residues).

This sequence belongs to the eukaryotic ribosomal protein eL18 family.

The protein localises to the cytoplasm. The polypeptide is Large ribosomal subunit protein eL18 (RPL18-A) (Trypanosoma brucei brucei (strain 927/4 GUTat10.1)).